We begin with the raw amino-acid sequence, 466 residues long: Glutamate--tRNA ligase (466 aa).

Residues 10–20 (PSPTGYLHIGG) carry the 'HIGH' region motif. The 'KMSKS' region signature appears at 237–241 (RLSKR). Residue Lys240 coordinates ATP.

It belongs to the class-I aminoacyl-tRNA synthetase family. Glutamate--tRNA ligase type 1 subfamily. In terms of assembly, monomer.

It localises to the cytoplasm. It catalyses the reaction tRNA(Glu) + L-glutamate + ATP = L-glutamyl-tRNA(Glu) + AMP + diphosphate. In terms of biological role, catalyzes the attachment of glutamate to tRNA(Glu) in a two-step reaction: glutamate is first activated by ATP to form Glu-AMP and then transferred to the acceptor end of tRNA(Glu). This Syntrophotalea carbinolica (strain DSM 2380 / NBRC 103641 / GraBd1) (Pelobacter carbinolicus) protein is Glutamate--tRNA ligase.